Consider the following 930-residue polypeptide: A disintegrin and metalloproteinase with thrombospondin motifs 5 (930 aa).

A signal peptide spans 1–16 (MLLGWASLLLCAFRLP). A propeptide spanning residues 17-261 (LAAVGPAATP…PQTWWRRRRR (245 aa)) is cleaved from the precursor. 2 disordered regions span residues 24 to 69 (ATPA…QRRR) and 206 to 231 (RASC…PSGR). The span at 31-42 (AGQPPTAAAAAQ) shows a compositional bias: low complexity. The segment covering 46-59 (RQGEEVQERAEPPG) has biased composition (basic and acidic residues). A Cysteine switch motif is present at residues 207-214 (ASCETPAS). Cys-209 provides a ligand contact to Zn(2+). Positions 267 to 476 (RQVELLLVAD…GHGNCLLDLP (210 aa)) constitute a Peptidase M12B domain. 8 cysteine pairs are disulfide-bonded: Cys-342–Cys-394, Cys-371–Cys-376, Cys-388–Cys-471, Cys-426–Cys-455, Cys-497–Cys-519, Cys-508–Cys-529, Cys-514–Cys-548, and Cys-542–Cys-553. His-410 is a binding site for Zn(2+). Glu-411 is a catalytic residue. Zn(2+)-binding residues include His-414 and His-420. Residues 485–566 (ELPGQTYDAT…TKKKYYSTSS (82 aa)) enclose the Disintegrin domain. Asn-498 carries N-linked (GlcNAc...) asparagine glycosylation. Residues 567 to 622 (HGNWGSWGSWGQCSRSCGGGVQFAYRHCNNPAPRNNGRYCTGKRAIYRSCSLMPCP) enclose the TSP type-1 1 domain. C-linked (Man) tryptophan glycosylation is found at Trp-570 and Trp-573. Cystine bridges form between Cys-579–Cys-616, Cys-583–Cys-621, and Cys-594–Cys-606. O-linked (Fuc...) serine glycosylation is present at Ser-582. N-linked (GlcNAc...) asparagine glycans are attached at residues Asn-728, Asn-802, and Asn-807. The interval 732 to 874 (TKIVGTFNKK…HGSNKVGSHT (143 aa)) is spacer. Residues 875–929 (SQPQWVTGPWLACSRTCDTGWHTRTVQCQDGNRKLAKGCPLSQRPSAFKQCLLKK) enclose the TSP type-1 2 domain.

It depends on Zn(2+) as a cofactor. Post-translationally, the precursor is cleaved by furin and PCSK7 outside of the cell. Glycosylated. Can be O-fucosylated by POFUT2 on a serine or a threonine residue found within the consensus sequence C1-X(2)-(S/T)-C2-G of the TSP type-1 repeat domains where C1 and C2 are the first and second cysteine residue of the repeat, respectively. Fucosylated repeats can then be further glycosylated by the addition of a beta-1,3-glucose residue by the glucosyltransferase, B3GALTL. Fucosylation mediates the efficient secretion of ADAMTS family members. Can also be C-glycosylated with one or two mannose molecules on tryptophan residues within the consensus sequence W-X-X-W of the TPRs, and N-glycosylated. These other glycosylations can also facilitate secretion. Expressed at low level in placenta primarily but also detected in heart and brain, cervix, uterus, bladder, esophagus, rib cartilage, chondroblastoma, fibrous tissue and a joint capsule from an arthritic patient.

The protein localises to the secreted. It localises to the extracellular space. The protein resides in the extracellular matrix. Functionally, metalloproteinase that plays an important role in connective tissue organization, development, inflammation and cell migration. Extracellular matrix (ECM) degrading enzyme that show proteolytic activity toward the hyalectan group of chondroitin sulfate proteoglycans (CSPGs) including ACAN, VCAN, BCAN and NCAN. Cleavage within the hyalectans occurs at Glu-Xaa recognition motifs. Plays a role in embryonic development, including limb and cardiac morphogenesis, and skeletal muscle development through its VCAN remodeling properties. Cleaves VCAN in the pericellular matrix surrounding myoblasts, facilitating myoblast contact and fusion which is required for skeletal muscle development and regeneration. Participates in development of brown adipose tissue and browning of white adipose tissue. Plays an important role for T-lymphocyte migration from draining lymph nodes following viral infection. The chain is A disintegrin and metalloproteinase with thrombospondin motifs 5 (ADAMTS5) from Homo sapiens (Human).